Here is a 199-residue protein sequence, read N- to C-terminus: Dephospho-CoA kinase (199 aa).

The DPCK domain maps to 3–199 (ILGLTGSIGM…ATAKMPQRRA (197 aa)). An ATP-binding site is contributed by 11–16 (GMGKST).

It belongs to the CoaE family.

The protein localises to the cytoplasm. It carries out the reaction 3'-dephospho-CoA + ATP = ADP + CoA + H(+). It participates in cofactor biosynthesis; coenzyme A biosynthesis; CoA from (R)-pantothenate: step 5/5. In terms of biological role, catalyzes the phosphorylation of the 3'-hydroxyl group of dephosphocoenzyme A to form coenzyme A. This is Dephospho-CoA kinase from Rhodopseudomonas palustris (strain BisB18).